We begin with the raw amino-acid sequence, 356 residues long: Tyrosine recombinase XerS (356 aa).

The 106-residue stretch at 16 to 121 folds into the Core-binding (CB) domain; sequence VMPPYVLEYY…ALSSLYKYLT (106 aa). A Tyr recombinase domain is found at 169–354; it reads GFLDYIDSEY…INEEQKNALD (186 aa). Active-site residues include R210, K234, H306, R309, and H332. Y341 serves as the catalytic O-(3'-phospho-DNA)-tyrosine intermediate.

Belongs to the 'phage' integrase family. XerS subfamily.

The protein localises to the cytoplasm. With respect to regulation, ftsK is required for recombination. In terms of biological role, site-specific tyrosine recombinase, which acts by catalyzing the cutting and rejoining of the recombining DNA molecules. Essential to convert dimers of the bacterial chromosome into monomers to permit their segregation at cell division. Binds an atypical recombination dif site (difSL). Binds preferentially to the left arm and cooperatively to the right arm of difSL. The protein is Tyrosine recombinase XerS of Lactococcus lactis subsp. cremoris (strain MG1363).